Reading from the N-terminus, the 350-residue chain is Dihydroorotase (350 aa).

The Zn(2+) site is built by His-17 and His-19. Substrate-binding positions include 19-21 (HLR) and Asn-45. Lys-103, His-140, and His-178 together coordinate Zn(2+). Lys-103 is modified (N6-carboxylysine). His-140 is a substrate binding site. Leu-224 provides a ligand contact to substrate. Position 252 (Asp-252) interacts with Zn(2+). The active site involves Asp-252. Residues His-256 and Ala-268 each contribute to the substrate site.

Belongs to the metallo-dependent hydrolases superfamily. DHOase family. Class II DHOase subfamily. As to quaternary structure, homodimer. The cofactor is Zn(2+).

The catalysed reaction is (S)-dihydroorotate + H2O = N-carbamoyl-L-aspartate + H(+). The protein operates within pyrimidine metabolism; UMP biosynthesis via de novo pathway; (S)-dihydroorotate from bicarbonate: step 3/3. Catalyzes the reversible cyclization of carbamoyl aspartate to dihydroorotate. The chain is Dihydroorotase from Buchnera aphidicola subsp. Acyrthosiphon pisum (strain APS) (Acyrthosiphon pisum symbiotic bacterium).